Reading from the N-terminus, the 250-residue chain is Ribosomal RNA small subunit methyltransferase J (250 aa).

S-adenosyl-L-methionine contacts are provided by residues 101 to 102, 117 to 118, 153 to 154, and Asp-171; these read RD, ER, and SS.

The protein belongs to the methyltransferase superfamily. RsmJ family.

It is found in the cytoplasm. It carries out the reaction guanosine(1516) in 16S rRNA + S-adenosyl-L-methionine = N(2)-methylguanosine(1516) in 16S rRNA + S-adenosyl-L-homocysteine + H(+). Functionally, specifically methylates the guanosine in position 1516 of 16S rRNA. In Erwinia tasmaniensis (strain DSM 17950 / CFBP 7177 / CIP 109463 / NCPPB 4357 / Et1/99), this protein is Ribosomal RNA small subunit methyltransferase J.